The chain runs to 719 residues: Phosphoribosylformylglycinamidine synthase subunit PurL (719 aa).

Residue H47 is part of the active site. Residues Y50 and K89 each contribute to the ATP site. E91 lines the Mg(2+) pocket. Substrate contacts are provided by residues 92–95 and R114; that span reads SHNH. H93 acts as the Proton acceptor in catalysis. D115 is a binding site for Mg(2+). Q238 is a substrate binding site. D266 is a Mg(2+) binding site. 310-312 is a substrate binding site; sequence ESQ. Positions 488 and 525 each coordinate ATP. N526 lines the Mg(2+) pocket. Position 528 (S528) interacts with substrate.

Belongs to the FGAMS family. In terms of assembly, monomer. Part of the FGAM synthase complex composed of 1 PurL, 1 PurQ and 2 PurS subunits.

It is found in the cytoplasm. It carries out the reaction N(2)-formyl-N(1)-(5-phospho-beta-D-ribosyl)glycinamide + L-glutamine + ATP + H2O = 2-formamido-N(1)-(5-O-phospho-beta-D-ribosyl)acetamidine + L-glutamate + ADP + phosphate + H(+). It functions in the pathway purine metabolism; IMP biosynthesis via de novo pathway; 5-amino-1-(5-phospho-D-ribosyl)imidazole from N(2)-formyl-N(1)-(5-phospho-D-ribosyl)glycinamide: step 1/2. Its function is as follows. Part of the phosphoribosylformylglycinamidine synthase complex involved in the purines biosynthetic pathway. Catalyzes the ATP-dependent conversion of formylglycinamide ribonucleotide (FGAR) and glutamine to yield formylglycinamidine ribonucleotide (FGAM) and glutamate. The FGAM synthase complex is composed of three subunits. PurQ produces an ammonia molecule by converting glutamine to glutamate. PurL transfers the ammonia molecule to FGAR to form FGAM in an ATP-dependent manner. PurS interacts with PurQ and PurL and is thought to assist in the transfer of the ammonia molecule from PurQ to PurL. This is Phosphoribosylformylglycinamidine synthase subunit PurL from Roseobacter denitrificans (strain ATCC 33942 / OCh 114) (Erythrobacter sp. (strain OCh 114)).